Consider the following 786-residue polypeptide: DNA repair and recombination protein RAD54-like (786 aa).

The interval 2 to 9 (RRSLAPSQ) is required for chromatin remodeling, strand pairing activities and coupling of ATPase activity. Position 22 is a phosphothreonine (T22). The Helicase ATP-binding domain occupies 165–340 (EGKRGSFNGC…FSLVNFVNPE (176 aa)). 178-185 (DEMGLGKT) contacts ATP. Positions 291 to 294 (DEGH) match the DEGH box motif. Residues 497-654 (LLDFMLAAIR…NNESVEKHFT (158 aa)) form the Helicase C-terminal domain. A disordered region spans residues 738–786 (EAKPAATTTDEDEELSDSKRKAKKTLASDDDDDEDFVLNCSSGEEFSGF). Over residues 776–786 (NCSSGEEFSGF) the composition is skewed to polar residues.

It belongs to the SNF2/RAD54 helicase family. Interacts (via N-terminus) with spn-A/Rad51.

It localises to the nucleus. Functionally, involved in mitotic DNA repair and meiotic recombination. Functions in the recombinational DNA repair pathway. Essential for interhomolog gene conversion (GC), but may have a less important role in intersister GC than spn-A/Rad51. In the presence of DNA, spn-A/Rad51 enhances the ATPase activity of okr/Rad54. The sequence is that of DNA repair and recombination protein RAD54-like from Drosophila grimshawi (Hawaiian fruit fly).